Reading from the N-terminus, the 204-residue chain is High mobility group-T protein (204 aa).

DNA-binding regions (HMG box) lie at residues 8–78 (PRGK…RSYI) and 94–162 (PKRP…TAYR). Residues 162 to 204 (RNKGKVPVSMPAKAAAPAKDDDDDDDDDDDDEDDDDDDDEDDE) form a disordered region. Acidic residues predominate over residues 181 to 204 (DDDDDDDDDDDDEDDDDDDDEDDE).

This sequence belongs to the HMGB family.

It is found in the nucleus. The protein resides in the chromosome. In terms of biological role, binds preferentially single-stranded DNA and unwinds double-stranded DNA. This Oncorhynchus mykiss (Rainbow trout) protein is High mobility group-T protein.